The following is a 324-amino-acid chain: Beta-ketoacyl-[acyl-carrier-protein] synthase III (324 aa).

Catalysis depends on residues cysteine 114 and histidine 246. The ACP-binding stretch occupies residues 247–251 (QANLR). The active site involves asparagine 276.

Belongs to the thiolase-like superfamily. FabH family. As to quaternary structure, homodimer.

The protein localises to the cytoplasm. The enzyme catalyses malonyl-[ACP] + acetyl-CoA + H(+) = 3-oxobutanoyl-[ACP] + CO2 + CoA. The protein operates within lipid metabolism; fatty acid biosynthesis. Its function is as follows. Catalyzes the condensation reaction of fatty acid synthesis by the addition to an acyl acceptor of two carbons from malonyl-ACP. Catalyzes the first condensation reaction which initiates fatty acid synthesis and may therefore play a role in governing the total rate of fatty acid production. Possesses both acetoacetyl-ACP synthase and acetyl transacylase activities. Its substrate specificity determines the biosynthesis of branched-chain and/or straight-chain of fatty acids. This Campylobacter jejuni subsp. doylei (strain ATCC BAA-1458 / RM4099 / 269.97) protein is Beta-ketoacyl-[acyl-carrier-protein] synthase III.